The sequence spans 868 residues: Translation initiation factor IF-2 (868 aa).

Basic and acidic residues predominate over residues R103–V183. A disordered region spans residues R103–K274. Residues V190–R207 show a composition bias toward pro residues. Basic and acidic residues predominate over residues P213 to K254. Over residues G255–T264 the composition is skewed to basic residues. The tr-type G domain occupies P369–K538. Residues G378–T385 form a G1 region. Residue G378–T385 participates in GTP binding. The interval G403–H407 is G2. The interval D424–G427 is G3. GTP-binding positions include D424 to H428 and N478 to D481. A G4 region spans residues N478–D481. The G5 stretch occupies residues S514–K516.

This sequence belongs to the TRAFAC class translation factor GTPase superfamily. Classic translation factor GTPase family. IF-2 subfamily.

It is found in the cytoplasm. In terms of biological role, one of the essential components for the initiation of protein synthesis. Protects formylmethionyl-tRNA from spontaneous hydrolysis and promotes its binding to the 30S ribosomal subunits. Also involved in the hydrolysis of GTP during the formation of the 70S ribosomal complex. This chain is Translation initiation factor IF-2, found in Methylococcus capsulatus (strain ATCC 33009 / NCIMB 11132 / Bath).